Reading from the N-terminus, the 180-residue chain is ATP-dependent protease subunit HslV (180 aa).

Residue threonine 8 is part of the active site. The Na(+) site is built by glycine 165, aspartate 168, and threonine 171.

This sequence belongs to the peptidase T1B family. HslV subfamily. A double ring-shaped homohexamer of HslV is capped on each side by a ring-shaped HslU homohexamer. The assembly of the HslU/HslV complex is dependent on binding of ATP.

The protein resides in the cytoplasm. It catalyses the reaction ATP-dependent cleavage of peptide bonds with broad specificity.. Allosterically activated by HslU binding. Protease subunit of a proteasome-like degradation complex believed to be a general protein degrading machinery. The chain is ATP-dependent protease subunit HslV from Lactiplantibacillus plantarum (strain ATCC BAA-793 / NCIMB 8826 / WCFS1) (Lactobacillus plantarum).